The sequence spans 393 residues: Staphopain B (393 aa).

The first 36 residues, 1–36 (MNSSCKSRVFNIISIIMVSMLILSLGAFANNNKAKA), serve as a signal peptide directing secretion. A propeptide spanning residues 37–219 (DSHSKQLEIN…KVEENEAIQE (183 aa)) is cleaved from the precursor. Residues cysteine 243, histidine 340, and asparagine 360 contribute to the active site.

Belongs to the peptidase C47 family. In the cytoplasm, prematurely activated/folded SspB forms a stable non-covalent complex with SspC. Post-translationally, proteolytically cleaved by staphylococcal serine protease (SspA).

It localises to the secreted. With respect to regulation, prematurely activated/folded staphopain B is inhibited by staphostatin B (SspC), which is probably required to protect staphylococcal cytoplasmic proteins from degradation by SspB. Also inactivated by E-64 and stimulated by EDTA. Its function is as follows. Cysteine protease that plays an important role in the inhibition of host innate immune response. Degrades host elastin, fibrogen, fibronectin and kininogen. Blocks phagocytosis of opsonised S.aureus by neutrophils and monocytes by inducing their death in a proteolytic activity-dependent manner. Decreases surface expression of the 'don't eat me' signal CD31 on neutrophils. Cleaves host galectin-3/LGALS3, thereby inhibiting the neutrophil-activating ability of the lectin. The polypeptide is Staphopain B (sspB) (Staphylococcus aureus (strain NCTC 8325 / PS 47)).